Reading from the N-terminus, the 226-residue chain is Large ribosomal subunit protein uL1 (226 aa).

The protein belongs to the universal ribosomal protein uL1 family. As to quaternary structure, part of the 50S ribosomal subunit.

Its function is as follows. Binds directly to 23S rRNA. The L1 stalk is quite mobile in the ribosome, and is involved in E site tRNA release. Functionally, protein L1 is also a translational repressor protein, it controls the translation of the L11 operon by binding to its mRNA. This is Large ribosomal subunit protein uL1 from Borreliella burgdorferi (strain ZS7) (Borrelia burgdorferi).